The sequence spans 335 residues: Beta-hexosaminidase (335 aa).

Residues aspartate 60, arginine 68, arginine 133, and 163–164 contribute to the substrate site; that span reads KH. Histidine 176 (proton donor/acceptor) is an active-site residue. The active-site Nucleophile is aspartate 247.

The protein belongs to the glycosyl hydrolase 3 family. NagZ subfamily.

Its subcellular location is the cytoplasm. The enzyme catalyses Hydrolysis of terminal non-reducing N-acetyl-D-hexosamine residues in N-acetyl-beta-D-hexosaminides.. Its pathway is cell wall biogenesis; peptidoglycan recycling. Plays a role in peptidoglycan recycling by cleaving the terminal beta-1,4-linked N-acetylglucosamine (GlcNAc) from peptide-linked peptidoglycan fragments, giving rise to free GlcNAc, anhydro-N-acetylmuramic acid and anhydro-N-acetylmuramic acid-linked peptides. This chain is Beta-hexosaminidase, found in Stenotrophomonas maltophilia (strain R551-3).